The sequence spans 108 residues: UPF0235 protein Rpal_0418 (108 aa).

It belongs to the UPF0235 family.

The chain is UPF0235 protein Rpal_0418 from Rhodopseudomonas palustris (strain TIE-1).